Consider the following 572-residue polypeptide: Proline--tRNA ligase (572 aa).

Belongs to the class-II aminoacyl-tRNA synthetase family. ProS type 1 subfamily. Homodimer.

The protein localises to the cytoplasm. It catalyses the reaction tRNA(Pro) + L-proline + ATP = L-prolyl-tRNA(Pro) + AMP + diphosphate. In terms of biological role, catalyzes the attachment of proline to tRNA(Pro) in a two-step reaction: proline is first activated by ATP to form Pro-AMP and then transferred to the acceptor end of tRNA(Pro). As ProRS can inadvertently accommodate and process non-cognate amino acids such as alanine and cysteine, to avoid such errors it has two additional distinct editing activities against alanine. One activity is designated as 'pretransfer' editing and involves the tRNA(Pro)-independent hydrolysis of activated Ala-AMP. The other activity is designated 'posttransfer' editing and involves deacylation of mischarged Ala-tRNA(Pro). The misacylated Cys-tRNA(Pro) is not edited by ProRS. This is Proline--tRNA ligase from Yersinia enterocolitica serotype O:8 / biotype 1B (strain NCTC 13174 / 8081).